A 1009-amino-acid polypeptide reads, in one-letter code: Kinesin-like protein KIN-5C (1009 aa).

Positions 12–359 constitute a Kinesin motor domain; that stretch reads NVQVLLRCRP…LDYAHRAKNI (348 aa). 98-105 contributes to the ATP binding site; sequence GQTGTGKT. Residues 406–526 are a coiled coil; the sequence is YQEESERKVM…NSSLHQKIGR (121 aa). Disordered stretches follow at residues 862–882 and 987–1009; these read SNEQ…KDVT and YESF…SQVN. 2 stretches are compositionally biased toward basic and acidic residues: residues 863–882 and 987–996; these read NEQH…KDVT and YESFATKETK. The segment covering 997-1009 has biased composition (polar residues); the sequence is PQQLTRSPLSQVN.

It belongs to the TRAFAC class myosin-kinesin ATPase superfamily. Kinesin family. KIN-5/BimC subfamily.

The protein resides in the cytoplasm. Its subcellular location is the cytoskeleton. It is found in the spindle. Responsible for microtubule translocation. May be important for the organization of phragmoplast-specific arrays of microtubules. Plays an essential role in stabilizing the mitotic spindle. Required during mitotic cytokinesis. The polypeptide is Kinesin-like protein KIN-5C (Arabidopsis thaliana (Mouse-ear cress)).